We begin with the raw amino-acid sequence, 104 residues long: Large ribosomal subunit protein uL24 (104 aa).

The protein belongs to the universal ribosomal protein uL24 family. Part of the 50S ribosomal subunit.

In terms of biological role, one of two assembly initiator proteins, it binds directly to the 5'-end of the 23S rRNA, where it nucleates assembly of the 50S subunit. Its function is as follows. One of the proteins that surrounds the polypeptide exit tunnel on the outside of the subunit. This Nitrobacter hamburgensis (strain DSM 10229 / NCIMB 13809 / X14) protein is Large ribosomal subunit protein uL24.